A 104-amino-acid chain; its full sequence is Meiotically up-regulated gene 150 protein (104 aa).

Transmembrane regions (helical) follow at residues 30-50, 54-74, and 84-104; these read FFLKNIIVLSNYLYLLYKAWI, TISLCCDFPLFNFLFIAIPYF, and LLWFLFVSLCFITLSFQSLEI.

The protein resides in the endoplasmic reticulum membrane. In terms of biological role, has a role in meiosis. The chain is Meiotically up-regulated gene 150 protein (mug150) from Schizosaccharomyces pombe (strain 972 / ATCC 24843) (Fission yeast).